A 364-amino-acid polypeptide reads, in one-letter code: MLIFPLINDTSRKIIHIDMDAFFAAVEERDNPALKGKPVVIGKDPRETGGRGVVSTCNYEARKYGIHSAMSSKEAYERCPKAIFISGNYEKYRTVGDQIRRIFKRYTDVVEPMSIDEAYLDVTDNKLGIKSAVKIAKLIQHDIWKEVGLTCSAGVSYNKFLAKLASDFEKPHGLTLVLKEDALCFLAKLPIEKFHGVGKKSVKKLHDMGIYTGQDLLAVPEMTLIDHFGRFGFDLYRKARGISNSPVKSDRIRKSIGSERTYAKLLYQETDIKAEISKNVKRVAALLQDHKKLGKTIVLKVRYADFTTLTKRVTLPELTRNAAQIEQVAGDIFDSLSENPAGIRLLGVTMTNLEDKVADISLDL.

Positions 14–198 (IIHIDMDAFF…LPIEKFHGVG (185 aa)) constitute a UmuC domain. Mg(2+) contacts are provided by Asp18 and Asp116. The active site involves Glu117.

This sequence belongs to the DNA polymerase type-Y family. As to quaternary structure, monomer. It depends on Mg(2+) as a cofactor.

It localises to the cytoplasm. It catalyses the reaction DNA(n) + a 2'-deoxyribonucleoside 5'-triphosphate = DNA(n+1) + diphosphate. Functionally, poorly processive, error-prone DNA polymerase involved in untargeted mutagenesis. Copies undamaged DNA at stalled replication forks, which arise in vivo from mismatched or misaligned primer ends. These misaligned primers can be extended by PolIV. Exhibits no 3'-5' exonuclease (proofreading) activity. May be involved in translesional synthesis, in conjunction with the beta clamp from PolIII. This is DNA polymerase IV from Streptococcus pyogenes serotype M1.